The following is a 474-amino-acid chain: Cyclin-dependent kinase 18 (474 aa).

A phosphoserine mark is found at S14, S74, S89, S98, S117, and S132. The segment at N44–V93 is disordered. Residues Y144 to F425 enclose the Protein kinase domain. ATP-binding positions include L150 to V158 and K173. The active-site Proton acceptor is the D265. Phosphoserine occurs at positions 440 and 443.

Belongs to the protein kinase superfamily. CMGC Ser/Thr protein kinase family. CDC2/CDKX subfamily. Isoform 2 expression is limited to several subcortical nuclei of the basal gangli and the spinal cord. Isoform 1 is widely expressed.

It catalyses the reaction L-seryl-[protein] + ATP = O-phospho-L-seryl-[protein] + ADP + H(+). The enzyme catalyses L-threonyl-[protein] + ATP = O-phospho-L-threonyl-[protein] + ADP + H(+). Functionally, may play a role in signal transduction cascades in terminally differentiated cells. This is Cyclin-dependent kinase 18 (CDK18) from Homo sapiens (Human).